We begin with the raw amino-acid sequence, 175 residues long: SsrA-binding protein (175 aa).

Belongs to the SmpB family.

Its subcellular location is the cytoplasm. Required for rescue of stalled ribosomes mediated by trans-translation. Binds to transfer-messenger RNA (tmRNA), required for stable association of tmRNA with ribosomes. tmRNA and SmpB together mimic tRNA shape, replacing the anticodon stem-loop with SmpB. tmRNA is encoded by the ssrA gene; the 2 termini fold to resemble tRNA(Ala) and it encodes a 'tag peptide', a short internal open reading frame. During trans-translation Ala-aminoacylated tmRNA acts like a tRNA, entering the A-site of stalled ribosomes, displacing the stalled mRNA. The ribosome then switches to translate the ORF on the tmRNA; the nascent peptide is terminated with the 'tag peptide' encoded by the tmRNA and targeted for degradation. The ribosome is freed to recommence translation, which seems to be the essential function of trans-translation. This chain is SsrA-binding protein, found in Prochlorococcus marinus subsp. pastoris (strain CCMP1986 / NIES-2087 / MED4).